We begin with the raw amino-acid sequence, 391 residues long: 3-ketoacyl-CoA thiolase (391 aa).

Catalysis depends on C95, which acts as the Acyl-thioester intermediate. Catalysis depends on proton acceptor residues H347 and C377.

Belongs to the thiolase-like superfamily. Thiolase family. In terms of assembly, heterotetramer of two alpha chains (FadB) and two beta chains (FadA).

It localises to the cytoplasm. The catalysed reaction is an acyl-CoA + acetyl-CoA = a 3-oxoacyl-CoA + CoA. It participates in lipid metabolism; fatty acid beta-oxidation. Catalyzes the final step of fatty acid oxidation in which acetyl-CoA is released and the CoA ester of a fatty acid two carbons shorter is formed. The polypeptide is 3-ketoacyl-CoA thiolase (Pseudomonas savastanoi pv. phaseolicola (strain 1448A / Race 6) (Pseudomonas syringae pv. phaseolicola (strain 1448A / Race 6))).